The primary structure comprises 280 residues: Putative ABC transporter ATP-binding protein PYRAB03730 (280 aa).

Residues Ile-4–Arg-244 form the ABC transporter domain. An ATP-binding site is contributed by Gly-38–Ser-45.

The protein belongs to the ABC transporter superfamily.

The protein resides in the cell membrane. Functionally, probably part of an ABC transporter complex. Responsible for energy coupling to the transport system. This Pyrococcus abyssi (strain GE5 / Orsay) protein is Putative ABC transporter ATP-binding protein PYRAB03730.